The chain runs to 106 residues: Small ribosomal subunit protein uS10 (106 aa).

Belongs to the universal ribosomal protein uS10 family. In terms of assembly, part of the 30S ribosomal subunit.

In terms of biological role, involved in the binding of tRNA to the ribosomes. This Prochlorococcus marinus subsp. pastoris (strain CCMP1986 / NIES-2087 / MED4) protein is Small ribosomal subunit protein uS10.